The sequence spans 44 residues: Photosystem I reaction center subunit IX (44 aa).

A helical membrane pass occupies residues 7 to 27 (YLSVAPVLSTLWFGSLAGLLI).

It belongs to the PsaJ family.

It localises to the plastid. The protein localises to the chloroplast thylakoid membrane. May help in the organization of the PsaE and PsaF subunits. This Arabis hirsuta (Hairy rock-cress) protein is Photosystem I reaction center subunit IX.